We begin with the raw amino-acid sequence, 68 residues long: Large ribosomal subunit protein bL32 (68 aa).

This sequence belongs to the bacterial ribosomal protein bL32 family.

This is Large ribosomal subunit protein bL32 from Orientia tsutsugamushi (strain Ikeda) (Rickettsia tsutsugamushi).